Reading from the N-terminus, the 337-residue chain is Protein-arginine kinase (337 aa).

The Phosphagen kinase C-terminal domain maps to isoleucine 12–glutamine 240. ATP is bound by residues alanine 15–lysine 19, arginine 162–phenylalanine 166, and lysine 193–serine 198.

The protein belongs to the ATP:guanido phosphotransferase family.

It carries out the reaction L-arginyl-[protein] + ATP = N(omega)-phospho-L-arginyl-[protein] + ADP + H(+). In terms of biological role, catalyzes the specific phosphorylation of arginine residues in proteins. In Clostridium perfringens (strain ATCC 13124 / DSM 756 / JCM 1290 / NCIMB 6125 / NCTC 8237 / Type A), this protein is Protein-arginine kinase.